A 46-amino-acid chain; its full sequence is uncharacterized protein (46 aa).

It localises to the plastid. The protein localises to the chloroplast. This is an uncharacterized protein from Trieres chinensis (Marine centric diatom).